The primary structure comprises 519 residues: Protein tweety homolog 1 (519 aa).

Residues Met-1–Leu-42 are Extracellular-facing. A helical membrane pass occupies residues Val-43–Ile-63. Topologically, residues Cys-64 to Arg-82 are cytoplasmic. The helical transmembrane segment at Leu-83–Phe-103 threads the bilayer. Topologically, residues Ala-104–Trp-217 are extracellular. Asn-142, Asn-163, and Asn-176 each carry an N-linked (GlcNAc...) asparagine glycan. The chain crosses the membrane as a helical span at residues Ala-218–Phe-238. At Cys-239–Gly-245 the chain is on the cytoplasmic side. Residues Ala-246–Ile-266 traverse the membrane as a helical segment. Over Ser-267–Met-395 the chain is Extracellular. N-linked (GlcNAc...) asparagine glycans are attached at residues Asn-328, Asn-341, Asn-348, and Asn-389. The helical transmembrane segment at Ser-396–Val-416 threads the bilayer. The Cytoplasmic portion of the chain corresponds to Ser-417–Met-519. Residues Tyr-459–Leu-485 form a disordered region.

This sequence belongs to the tweety family.

It is found in the cell membrane. Functionally, probable chloride channel. The polypeptide is Protein tweety homolog 1 (ttyh-1) (Caenorhabditis elegans).